The primary structure comprises 1093 residues: Probable cellulose synthase A catalytic subunit 3 [UDP-forming] (1093 aa).

Residues 1-280 (MEASAGLVAG…PSSQINPYRM (280 aa)) lie on the Cytoplasmic side of the membrane. Positions 39, 42, 58, 61, 66, 69, 81, and 84 each coordinate Zn(2+). Residues 39–85 (CQICGDDVGLNPDGEPFVACNECAFPVCRDCYEYERREGTQNCPQCK) form an RING-type; degenerate zinc finger. Residues 233-246 (LHQMRNDGGGKDWD) show a composition bias toward basic and acidic residues. Residues 233-257 (LHQMRNDGGGKDWDGDGDDGDLPLM) form a disordered region. A helical transmembrane segment spans residues 281–301 (VIIIRLVVLGFFFHYRVMHPV). The Extracellular segment spans residues 302 to 303 (PD). A helical membrane pass occupies residues 304-324 (AFALWLISVICEIWFAMSWIL). Over 325–869 (DQFPKWFPIE…CLERFSYINS (545 aa)) the chain is Cytoplasmic. UDP-alpha-D-glucose is bound by residues Ser363, Lys369, Glu370, and Asp399. Residue Asp399 is part of the active site. Positions 453–480 (VRERRAMKREYEEFKVRINALVAKAQKV) form a coiled coil. Residue Lys540 participates in UDP-alpha-D-glucose binding. Mn(2+) contacts are provided by Lys541 and Asp565. The active site involves Asp793. Residues 870–890 (IVYPFTSIPLLAYCTLPAICL) traverse the membrane as a helical segment. Residues 891 to 902 (LTGKFITPELTN) lie on the Extracellular side of the membrane. The chain crosses the membrane as a helical span at residues 903–923 (VASLWFMSLFICIFATGILEM). Residues 924-939 (RWSGVGIDDWWRNEQF) lie on the Cytoplasmic side of the membrane. The helical transmembrane segment at 940–960 (WVIGGVSSHLFALFQGLLKVI) threads the bilayer. The Extracellular portion of the chain corresponds to 961-988 (AGIDTSFTVTSKGGDDEEFSELYTFKWT). Residues 989–1009 (TLLIPPTTLLLLNFIGVVAGV) traverse the membrane as a helical segment. Residues 1010-1020 (SNAINNGYESW) are Cytoplasmic-facing. The helical transmembrane segment at 1021 to 1041 (GPLFGKLFFAFWVIVHLYPFL) threads the bilayer. Residues 1042–1050 (KGLVGRQNR) are Extracellular-facing. A helical membrane pass occupies residues 1051-1071 (TPTIVIVWSILLASIFSLLWV). At 1072–1093 (RIDPFLAKNDGPLLEECGLDCN) the chain is on the cytoplasmic side.

The protein belongs to the glycosyltransferase 2 family. Plant cellulose synthase subfamily. Mn(2+) is required as a cofactor. Requires Zn(2+) as cofactor.

Its subcellular location is the cell membrane. It carries out the reaction [(1-&gt;4)-beta-D-glucosyl](n) + UDP-alpha-D-glucose = [(1-&gt;4)-beta-D-glucosyl](n+1) + UDP + H(+). The protein operates within glycan metabolism; plant cellulose biosynthesis. Probable catalytic subunit of cellulose synthase terminal complexes ('rosettes'), required for beta-1,4-glucan microfibril crystallization, a major mechanism of the cell wall formation. The chain is Probable cellulose synthase A catalytic subunit 3 [UDP-forming] (CESA3) from Oryza sativa subsp. japonica (Rice).